The chain runs to 78 residues: Putative defensin-like protein 133 (78 aa).

The first 24 residues, 1-24, serve as a signal peptide directing secretion; that stretch reads MKRSFLLLLTILTIFIILGQGVMG. 4 disulfides stabilise this stretch: cysteine 34–cysteine 75, cysteine 44–cysteine 68, cysteine 49–cysteine 72, and cysteine 53–cysteine 74.

This sequence belongs to the DEFL family.

It localises to the secreted. The protein is Putative defensin-like protein 133 (LCR33) of Arabidopsis thaliana (Mouse-ear cress).